We begin with the raw amino-acid sequence, 333 residues long: NADH-quinone oxidoreductase subunit H (333 aa).

A run of 8 helical transmembrane segments spans residues 17-37 (VIQA…MSFI), 91-111 (VAMA…TLGV), 116-136 (IGLL…LFGG), 156-176 (ISYE…AGSF), 188-208 (MWFI…GVAV), 244-264 (YVNI…GWLA), 272-292 (FIPP…MFVL), and 310-330 (WKVC…VILM).

The protein belongs to the complex I subunit 1 family. As to quaternary structure, NDH-1 is composed of 14 different subunits. Subunits NuoA, H, J, K, L, M, N constitute the membrane sector of the complex.

Its subcellular location is the cell inner membrane. It catalyses the reaction a quinone + NADH + 5 H(+)(in) = a quinol + NAD(+) + 4 H(+)(out). In terms of biological role, NDH-1 shuttles electrons from NADH, via FMN and iron-sulfur (Fe-S) centers, to quinones in the respiratory chain. The immediate electron acceptor for the enzyme in this species is believed to be ubiquinone. Couples the redox reaction to proton translocation (for every two electrons transferred, four hydrogen ions are translocated across the cytoplasmic membrane), and thus conserves the redox energy in a proton gradient. This subunit may bind ubiquinone. In Acinetobacter baylyi (strain ATCC 33305 / BD413 / ADP1), this protein is NADH-quinone oxidoreductase subunit H.